The sequence spans 399 residues: Elongation factor Tu (399 aa).

A tr-type G domain is found at K10 to T209. A G1 region spans residues G19–T26. GTP is bound at residue G19–T26. T26 lines the Mg(2+) pocket. Positions G60–A64 are G2. The G3 stretch occupies residues D81–G84. Residues D81 to H85 and N136 to D139 each bind GTP. Residues N136 to D139 form a G4 region. Residues S174–L176 are G5.

This sequence belongs to the TRAFAC class translation factor GTPase superfamily. Classic translation factor GTPase family. EF-Tu/EF-1A subfamily. Monomer.

Its subcellular location is the cytoplasm. It catalyses the reaction GTP + H2O = GDP + phosphate + H(+). Its function is as follows. GTP hydrolase that promotes the GTP-dependent binding of aminoacyl-tRNA to the A-site of ribosomes during protein biosynthesis. The sequence is that of Elongation factor Tu from Campylobacter jejuni (strain RM1221).